The primary structure comprises 417 residues: Ankyrin repeat and SAM domain-containing protein 4B (417 aa).

The mediates localization to microvilli stretch occupies residues 1–252; that stretch reads MSTRYHQAAS…SGDFKEKLQL (252 aa). ANK repeat units lie at residues 31–60, 64–93, and 97–126; these read DGMT…DPDR, WGNT…NIFA, and DLQT…AQNI. Residues 130-164 adopt a coiled-coil conformation; sequence KKVTRLKEQAQKNARRQIKECERLQEKHQNKMAHT. The interval 151–195 is disordered; sequence ERLQEKHQNKMAHTYSKEESGTLSSSKGTFSRSSPSNASAPGTFG. Residues 171 to 190 show a composition bias toward polar residues; sequence GTLSSSKGTFSRSSPSNASA. The mediates interaction with MYO7B stretch occupies residues 253 to 346; it reads SAEEDGSVHH…EWEEDVVDAT (94 aa). Ser283 carries the post-translational modification Phosphoserine. The disordered stretch occupies residues 305–330; the sequence is RQGASEADEGAADEEGEENGLKDDLP. Residues 310–322 show a composition bias toward acidic residues; sequence EADEGAADEEGEE. The region spanning 351 to 403 is the SAM domain; that stretch reads FLLSQHLEEFLPIFKREQIDLEALLLCSDEDLQSIQMQLGPRKKVLNAINRRK. The PDZ-binding; mediates interaction with USH1C motif lies at 415-417; it reads TSL.

As to quaternary structure, part of the IMAC/intermicrovillar adhesion complex/intermicrovillar tip-link complex composed of ANKS4B, MYO7B, USH1C, CDHR2 and CDHR5. Interacts with USH1C; the interaction is direct and is required for ANKS4B localization to the tip of microvilli. Interacts with MYO7B; the interaction is direct. May interact with HSPA5. Expressed in kidney and small intestine.

The protein localises to the cell projection. The protein resides in the microvillus. As part of the intermicrovillar adhesion complex/IMAC plays a role in epithelial brush border differentiation, controlling microvilli organization and length. Plays a role in assembly of the complex. May play a role in cellular response to endoplasmic reticulum stress. This is Ankyrin repeat and SAM domain-containing protein 4B from Homo sapiens (Human).